The chain runs to 130 residues: S-protein homolog 22 (130 aa).

The N-terminal stretch at 1–21 is a signal peptide; sequence MKYFTIFFIFFSLCMFGHVSG.

This sequence belongs to the plant self-incompatibility (S1) protein family.

Its subcellular location is the secreted. This chain is S-protein homolog 22, found in Arabidopsis thaliana (Mouse-ear cress).